The chain runs to 755 residues: MSTSRRDFLKYFAMSAAVAAASGAGFGSLALAADNRPEKWVKGVCRYCGTGCGVLVGVKDGKAVAIQGDPNNHNAGLLCLKGSLLIPVLNSKERVTQPLVRRHKGGKLEPVSWDEALDLMASRFRSSIDMYGPNSVAWYGSGQCLTEESYVANKIFKGGFGTNNVDGNPRLCMASAVGGYVTSFGKDEPMGTYADIDQATCFFIIGSNTSEAHPVLFRRIARRKQVEPGVKIIVADPRRTNTSRIADMHVAFRPGTDLAFMHSMAWVIINEELDNPRFWQRYVNFMDAEGKPSDFEGYKAFLENYRPEKVAEICRVPVEQIYGAARAFAESAATMSLWCMGINQRVQGVFANNLIHNLHLITGQICRPGATSFSLTGQPNACGGVRDGGALSHLLPAGRAIPNAKHRAEMEKLWGLPEGRIAPEPGYHTVALFEALGRGDVKCMIICETNPAHTLPNLNKVHKAMSHPESFIVCIEAFPDAVTLEYADLVLPPAFWCERDGVYGCGERRYSLTEKAVDPPGQCRPTVNTLVEFARRAGVDPQLVNFRNAEDVWNEWRMVSKGTTYDFWGMTRERLRKESGLIWPCPSEDHPGTSLRYVRGQDPCVPADHPDRFFFYGKPDGRAVIWMRPAKGAAEEPDAEYPLYLTSMRVIDHWHTATMTGKVPELQKANPIAFVEINEEDAARTGIKHGDSVIVETRRDAMELPARVSDVCRPGLIAVPFFDPKKLVNKLFLDATDPVSREPEYKICAARVRKA.

Positions 1 to 32 (MSTSRRDFLKYFAMSAAVAAASGAGFGSLALA) form a signal peptide, tat-type signal. In terms of domain architecture, 4Fe-4S Mo/W bis-MGD-type spans 38–93 (EKWVKGVCRYCGTGCGVLVGVKDGKAVAIQGDPNNHNAGLLCLKGSLLIPVLNSKE). [4Fe-4S] cluster is bound by residues cysteine 45, cysteine 48, cysteine 52, and cysteine 79. Mo-bis(molybdopterin guanine dinucleotide)-binding positions include lysine 81, glutamine 143, asparagine 168, cysteine 172, 208–212 (NTSEA), 236–238 (DPR), 255–257 (GTD), methionine 340, glutamine 344, asparagine 450, 475–477 (IEA), and 647–656 (SMRVIDHWHT). Residues 648–653 (MRVIDH) and phenylalanine 721 contribute to the substrate site. The Mo-bis(molybdopterin guanine dinucleotide) site is built by asparagine 729 and lysine 746.

It belongs to the prokaryotic molybdopterin-containing oxidoreductase family. NasA/NapA/NarB subfamily. Monomer. Component of the periplasmic nitrate reductase NapAB complex composed of NapA and NapB. Requires [4Fe-4S] cluster as cofactor. The cofactor is Mo-bis(molybdopterin guanine dinucleotide). Post-translationally, predicted to be exported by the Tat system. The position of the signal peptide cleavage has been experimentally proven.

It is found in the periplasm. It catalyses the reaction 2 Fe(II)-[cytochrome] + nitrate + 2 H(+) = 2 Fe(III)-[cytochrome] + nitrite + H2O. With respect to regulation, activated by potassium and sodium ions and inhibited by magnesium and calcium ions. Functionally, catalytic subunit of the periplasmic nitrate reductase complex NapAB. Receives electrons from NapB and catalyzes the reduction of nitrate to nitrite. The protein is Periplasmic nitrate reductase of Desulfovibrio desulfuricans (strain ATCC 27774 / DSM 6949 / MB).